The sequence spans 556 residues: MGQETNMLNAHQQLVRTSSGRPGHDKRQQTPGTATGLLKLLSSTPYAEQRSLGSGDGVIHAQKQRSRSAGQTPKKDRRLRGRNKKGQSSAEAEDVVPSSPRKPSFPFQWAWESFTTDGRALHQPSSVLAPGHQALPLPLAVHHHKSRRKSTPALPEAHSFCWKTEEPNLERRQQLRACSCTSIPPGRGTSQELEPSGEGGLQSPRKSSGSGLEPEESEPEGLGAEEAERGLIPGELPQLPRRGLILEEEQFSEATEEAEDGEHRAPWRRRTSSRRKGRNSGEEAWEESEVRRLESVSSSTNLREPQRRKPRAKELEGPWDLEKLQRKLQQELDCGPEKQPWKSLRAAVQASNWSRKAHPLGDDETFLFANFPNRTFHKRQEATRNLLRAWELQQREEQQQAEVRRAREQRVQHQVARCLAAYAPRGSRGPGAAQRKLEELRRQERQRFVEYQAELQGIQHRVQARPYLFQQAMQANARLNVTRRFSQVLSALGLDEEQLLAKAGKRDMEGAPRRHRSHRSVGARMEPSSQSPPKMEPTGSQADQHFAPNPDQELSP.

The span at 1–20 (MGQETNMLNAHQQLVRTSSG) shows a compositional bias: polar residues. Disordered stretches follow at residues 1-102 (MGQE…SPRK) and 180-320 (CTSI…GPWD). Positions 75 to 85 (KDRRLRGRNKK) are enriched in basic residues. Acidic residues-rich tracts occupy residues 213 to 225 (EPEE…LGAE) and 246 to 260 (LEEE…EAED). The span at 266 to 278 (PWRRRTSSRRKGR) shows a compositional bias: basic residues. Positions 304 to 320 (EPQRRKPRAKELEGPWD) are enriched in basic and acidic residues. Positions 387–463 (LRAWELQQRE…ELQGIQHRVQ (77 aa)) form a coiled coil. A disordered region spans residues 503–556 (AGKRDMEGAPRRHRSHRSVGARMEPSSQSPPKMEPTGSQADQHFAPNPDQELSP). Positions 527–543 (PSSQSPPKMEPTGSQAD) are enriched in polar residues.

In Bos taurus (Bovine), this protein is Testis-specific protein 10-interacting protein (TSGA10IP).